Consider the following 226-residue polypeptide: Uridylate kinase (226 aa).

9–10 lines the ATP pocket; sequence GS. Gly-46 provides a ligand contact to UMP. 2 residues coordinate ATP: Gly-47 and Arg-51. UMP contacts are provided by residues Asp-68 and 116–122; that span reads THPGHTT. Residues Thr-142, Asn-143, Tyr-148, and Asp-151 each contribute to the ATP site.

This sequence belongs to the UMP kinase family. In terms of assembly, homohexamer.

It localises to the cytoplasm. The catalysed reaction is UMP + ATP = UDP + ADP. It functions in the pathway pyrimidine metabolism; CTP biosynthesis via de novo pathway; UDP from UMP (UMPK route): step 1/1. With respect to regulation, inhibited by UTP. In terms of biological role, catalyzes the reversible phosphorylation of UMP to UDP. The chain is Uridylate kinase from Methanocaldococcus jannaschii (strain ATCC 43067 / DSM 2661 / JAL-1 / JCM 10045 / NBRC 100440) (Methanococcus jannaschii).